Here is a 373-residue protein sequence, read N- to C-terminus: Ribosomal protein uL16 3-hydroxylase (373 aa).

The 128-residue stretch at 92-219 (PTAALMRPFR…LISGFADYVL (128 aa)) folds into the JmjC domain. Substrate is bound by residues S114, 125–127 (HLD), R140, and H187. Residues H125 and D127 each coordinate Fe cation. Fe cation is bound at residue H187.

This sequence belongs to the ROX family. RoxA/YcfD subfamily. Homodimer. The cofactor is Fe(2+).

It carries out the reaction L-arginyl-[ribosomal protein uL16] + 2-oxoglutarate + O2 = (3R)-3-hydroxy-L-arginyl-[ribosomal protein uL16] + succinate + CO2. Functionally, growth-regulating oxygenase that catalyzes the hydroxylation of ribosomal protein uL16 on 'Arg-81'. In Escherichia coli (strain K12), this protein is Ribosomal protein uL16 3-hydroxylase (roxA).